The chain runs to 208 residues: Uracil phosphoribosyltransferase (208 aa).

5-phospho-alpha-D-ribose 1-diphosphate-binding positions include R78, R103, and 130-138; that span reads DPMLATGGS. Uracil is bound by residues I193 and 198–200; that span reads GDA. D199 lines the 5-phospho-alpha-D-ribose 1-diphosphate pocket.

Belongs to the UPRTase family. Requires Mg(2+) as cofactor.

The catalysed reaction is UMP + diphosphate = 5-phospho-alpha-D-ribose 1-diphosphate + uracil. It participates in pyrimidine metabolism; UMP biosynthesis via salvage pathway; UMP from uracil: step 1/1. Allosterically activated by GTP. Its function is as follows. Catalyzes the conversion of uracil and 5-phospho-alpha-D-ribose 1-diphosphate (PRPP) to UMP and diphosphate. This Escherichia fergusonii (strain ATCC 35469 / DSM 13698 / CCUG 18766 / IAM 14443 / JCM 21226 / LMG 7866 / NBRC 102419 / NCTC 12128 / CDC 0568-73) protein is Uracil phosphoribosyltransferase.